A 250-amino-acid polypeptide reads, in one-letter code: Probable fimbrial chaperone YfcS (250 aa).

The first 28 residues, Met-1 to Ala-28, serve as a signal peptide directing secretion.

This sequence belongs to the periplasmic pilus chaperone family.

It is found in the periplasm. Its function is as follows. Part of the yfcOPQRSUV fimbrial operon. Could contribute to adhesion to various surfaces in specific environmental niches. Increases adhesion to eukaryotic T24 bladder epithelial cells in the absence of fim genes. In Escherichia coli (strain K12), this protein is Probable fimbrial chaperone YfcS (yfcS).